The primary structure comprises 184 residues: MKINKKNLIWIDLEMTGLNPKVHRIIEIATLITDTNLNIIAEGPVIPIYQKKEHILVMDEWNKRIHENNGLIKRVEKSLYNEQKAEHETILFLKKWVPIQVSPMCGNSIAQDRRFLFQYMPHLENYFHYRYIDVSTIKELAYRWNPSILDKFKKNHYHKALEDIRESVVELNFYKKNFLKFKKK.

The 164-residue stretch at 8–171 (LIWIDLEMTG…EDIRESVVEL (164 aa)) folds into the Exonuclease domain. Tyrosine 129 is a catalytic residue.

It belongs to the oligoribonuclease family.

It localises to the cytoplasm. In terms of biological role, 3'-to-5' exoribonuclease specific for small oligoribonucleotides. In Buchnera aphidicola subsp. Acyrthosiphon pisum (strain APS) (Acyrthosiphon pisum symbiotic bacterium), this protein is Oligoribonuclease.